We begin with the raw amino-acid sequence, 89 residues long: Small ribosomal subunit protein uS15 (89 aa).

This sequence belongs to the universal ribosomal protein uS15 family. Part of the 30S ribosomal subunit. Forms a bridge to the 50S subunit in the 70S ribosome, contacting the 23S rRNA.

One of the primary rRNA binding proteins, it binds directly to 16S rRNA where it helps nucleate assembly of the platform of the 30S subunit by binding and bridging several RNA helices of the 16S rRNA. Its function is as follows. Forms an intersubunit bridge (bridge B4) with the 23S rRNA of the 50S subunit in the ribosome. The protein is Small ribosomal subunit protein uS15 of Mannheimia succiniciproducens (strain KCTC 0769BP / MBEL55E).